The chain runs to 400 residues: MIIKPRIRGFICTTTHPVGCEANVKEQIAYTKAQGPIKNAPKRVLVVGASSGYGLSSRIAAAFGGGASTIGVFFEKEGTEKKPGTAGFYNAAAFEKLAREEGLYAKSLNGDAFSNEAKQKTIDLIKEDLGQVDMVVYSLASPVRKMPETGELIRSALKPIGETYTSTAVDTNKDVIIEASVEPATEEEIKDTVTVMGGEDWELWINALSDAGVLAEGCKTVAYSYIGTELTWPIYWDGALGKAKMDLDRAAKALNEKLGATGGSANVAVLKSVVTQASSAIPVMPLYIAMVFKKMREEGVHEGCMEQIYRMFSQRLYKEDGSAAEVDDMNRLRLDDWELREDIQQHCRELWPQITTENLKELTDYVEYKEEFLKLFGFGVEGVDYEADVNPAVETDFIQI.

Residues 48–53 (GASSGY), 74–75 (FE), 111–112 (DA), and 139–140 (LA) contribute to the NAD(+) site. Tyr225 is a binding site for substrate. The active-site Proton donor is Tyr235. Residues Lys244 and 273–275 (VVT) each bind NAD(+).

This sequence belongs to the TER reductase family. In terms of assembly, monomer.

It carries out the reaction a 2,3-saturated acyl-[ACP] + NAD(+) = a (2E)-enoyl-[ACP] + NADH + H(+). It functions in the pathway lipid metabolism; fatty acid biosynthesis. Its function is as follows. Involved in the final reduction of the elongation cycle of fatty acid synthesis (FAS II). Catalyzes the reduction of a carbon-carbon double bond in an enoyl moiety that is covalently linked to an acyl carrier protein (ACP). The polypeptide is Enoyl-[acyl-carrier-protein] reductase [NADH] 1 (Vibrio parahaemolyticus serotype O3:K6 (strain RIMD 2210633)).